Consider the following 246-residue polypeptide: RNA polymerase sigma-B factor (246 aa).

The short motif at Asp-25–Val-38 is the Polymerase core binding element. The segment at residues Leu-201–Ile-220 is a DNA-binding region (H-T-H motif).

Belongs to the sigma-70 factor family.

Functionally, sigma factors are initiation factors that promote the attachment of RNA polymerase to specific initiation sites and are then released. This sigma factor is essential for late-stage differentiation of M.xanthus. The polypeptide is RNA polymerase sigma-B factor (sigB) (Myxococcus xanthus).